A 93-amino-acid chain; its full sequence is Antitoxin EndoAI (93 aa).

Belongs to the MazE/EndoAI family. In terms of assembly, homodimer, forms a heterohexamer composed of alternating toxin and antitoxin homodimers which inhibits the toxin's endoribonuclease activity. Antitoxin prevents RNA binding to the endoribonuclease.

In terms of biological role, antitoxin component of a type II toxin-antitoxin (TA) system. Antitoxin that directly inhibits activity of EndoA in vitro. Upon expression in E.coli counteracts inhibitory effect of endoribonuclease EndoA. The EndoA-EndoAI complex does not seem to bind its own promoter. The chain is Antitoxin EndoAI from Bacillus subtilis (strain 168).